We begin with the raw amino-acid sequence, 431 residues long: MRLMTKLGFRALVASCLIAAGAAANAQVNVLITGVGSTQFPIATANFANEAGLPQQVTSIVRADLARSGKFTNIDAGSTPVPETASVDLGAWKAKGANAFVAGSVNREANGQYKVNFILYDTVKQQSLGGLSLTATDTTLRTAGHKIADYIYQKLLGVRGVFATRLSYVIKTGNRYQLQISDSDGQNARIALSSTEPIISPAWSPSGTKVAYVSFERKKPIVYIHDLPTGRRYMVSDQKGNNSAPAWSPDSNTLAVALSLTGNTQIYTVNANGGGLRRLTQSSSIDTEPYYSPDGRWIYFTSDRGGAPQIYRMPAQGESAGAAQRVTFTGSYNTSPRISPDGKLLAYISRTGGGFKLYVQDLQTGAANAITNTNRDESPSFAANGQYLLYATQSGGRNVLAAVPSDGSAPPQILSVQGGSVREPSWGPFMQ.

A signal peptide spans 1–26; that stretch reads MRLMTKLGFRALVASCLIAAGAAANA. Residues 411-431 are disordered; it reads PQILSVQGGSVREPSWGPFMQ.

Belongs to the TolB family. As to quaternary structure, the Tol-Pal system is composed of five core proteins: the inner membrane proteins TolA, TolQ and TolR, the periplasmic protein TolB and the outer membrane protein Pal. They form a network linking the inner and outer membranes and the peptidoglycan layer.

It localises to the periplasm. Functionally, part of the Tol-Pal system, which plays a role in outer membrane invagination during cell division and is important for maintaining outer membrane integrity. The polypeptide is Tol-Pal system protein TolB (Burkholderia ambifaria (strain ATCC BAA-244 / DSM 16087 / CCUG 44356 / LMG 19182 / AMMD) (Burkholderia cepacia (strain AMMD))).